The primary structure comprises 69 residues: DNA gyrase inhibitor YacG (69 aa).

Residues 1–28 (MSGEGKKHGSNVEPLRPTRPCPECGRPS) are disordered. Zn(2+)-binding residues include cysteine 21, cysteine 24, cysteine 36, and cysteine 40.

This sequence belongs to the DNA gyrase inhibitor YacG family. As to quaternary structure, interacts with GyrB. Requires Zn(2+) as cofactor.

Inhibits all the catalytic activities of DNA gyrase by preventing its interaction with DNA. Acts by binding directly to the C-terminal domain of GyrB, which probably disrupts DNA binding by the gyrase. In Sinorhizobium fredii (strain NBRC 101917 / NGR234), this protein is DNA gyrase inhibitor YacG.